A 213-amino-acid polypeptide reads, in one-letter code: Glycerol-3-phosphate acyltransferase (213 aa).

6 helical membrane-spanning segments follow: residues 2–22 (ITIV…GLWI), 52–74 (AGMA…PIIF), 81–100 (PLIF…FAGF), 112–132 (VIFG…FGAL), 143–163 (VTAS…GFIL), and 164–184 (SNYD…IIIR).

This sequence belongs to the PlsY family. As to quaternary structure, probably interacts with PlsX.

Its subcellular location is the cell membrane. The catalysed reaction is an acyl phosphate + sn-glycerol 3-phosphate = a 1-acyl-sn-glycero-3-phosphate + phosphate. Its pathway is lipid metabolism; phospholipid metabolism. Its function is as follows. Catalyzes the transfer of an acyl group from acyl-phosphate (acyl-PO(4)) to glycerol-3-phosphate (G3P) to form lysophosphatidic acid (LPA). This enzyme utilizes acyl-phosphate as fatty acyl donor, but not acyl-CoA or acyl-ACP. This chain is Glycerol-3-phosphate acyltransferase, found in Streptococcus pneumoniae (strain ATCC 700669 / Spain 23F-1).